The following is a 512-amino-acid chain: Monocarboxylate transporter 14 (512 aa).

Topologically, residues 1-29 (MYTSHEDIGYDLEDDRKAKNKKTLKPHPD) are cytoplasmic. A run of 12 helical transmembrane segments spans residues 30–50 (IDGG…ILIM), 76–96 (WVSS…GLFI), 105–125 (AIIG…AANV), 129–149 (FITF…PAVV), 161–181 (LAQG…TVLL), 193–211 (AMFI…GALM), 317–337 (MFVA…IPFI), 355–375 (FPLT…LGAV), 381–401 (ISVW…IFLL), 410–430 (LAVI…MPVV), 446–466 (IIIC…GWIF), and 476–496 (FYIC…QPCI). Residues 497–512 (QMIDQSRRKCIEGAHV) are Cytoplasmic-facing.

This sequence belongs to the major facilitator superfamily. Monocarboxylate porter (TC 2.A.1.13) family.

The protein resides in the cell membrane. Functionally, proton-linked monocarboxylate transporter. May catalyze the transport of monocarboxylates across the plasma membrane. The protein is Monocarboxylate transporter 14 (Slc16a14) of Mus musculus (Mouse).